The sequence spans 349 residues: tRNA N6-adenosine threonylcarbamoyltransferase (349 aa).

Positions 113 and 117 each coordinate Fe cation. Residues 135 to 139 (LVSGG), D169, G182, D186, and N281 contribute to the substrate site. Fe cation is bound at residue D309.

This sequence belongs to the KAE1 / TsaD family. Fe(2+) serves as cofactor.

The protein resides in the cytoplasm. It carries out the reaction L-threonylcarbamoyladenylate + adenosine(37) in tRNA = N(6)-L-threonylcarbamoyladenosine(37) in tRNA + AMP + H(+). Required for the formation of a threonylcarbamoyl group on adenosine at position 37 (t(6)A37) in tRNAs that read codons beginning with adenine. Is involved in the transfer of the threonylcarbamoyl moiety of threonylcarbamoyl-AMP (TC-AMP) to the N6 group of A37, together with TsaE and TsaB. TsaD likely plays a direct catalytic role in this reaction. The chain is tRNA N6-adenosine threonylcarbamoyltransferase from Corynebacterium aurimucosum (strain ATCC 700975 / DSM 44827 / CIP 107346 / CN-1) (Corynebacterium nigricans).